A 142-amino-acid chain; its full sequence is Hemoglobin subunit alpha (142 aa).

One can recognise a Globin domain in the interval 2–142 (VLSAADKGHV…VSTVLTSKYR (141 aa)). Phosphoserine is present on S4. K8 and K12 each carry N6-succinyllysine. K17 is subject to N6-acetyllysine; alternate. At K17 the chain carries N6-succinyllysine; alternate. Y25 carries the phosphotyrosine modification. S36 carries the phosphoserine modification. K41 is modified (N6-succinyllysine). S50 is subject to Phosphoserine. Position 59 (H59) interacts with O2. H88 is a heme b binding site. Position 103 is a phosphoserine (S103). Position 109 is a phosphothreonine (T109). Position 125 is a phosphoserine (S125). T135 and T138 each carry phosphothreonine. Position 139 is a phosphoserine (S139).

This sequence belongs to the globin family. In terms of assembly, heterotetramer of two alpha chains and two beta chains. In terms of tissue distribution, red blood cells.

Its function is as follows. Involved in oxygen transport from the lung to the various peripheral tissues. In terms of biological role, hemopressin acts as an antagonist peptide of the cannabinoid receptor CNR1. Hemopressin-binding efficiently blocks cannabinoid receptor CNR1 and subsequent signaling. The sequence is that of Hemoglobin subunit alpha (HBA) from Notamacropus eugenii (Tammar wallaby).